The chain runs to 1385 residues: Pesticidal crystal protein Cry5Aa (1385 aa).

Disordered stretches follow at residues 768–799 and 1359–1385; these read NITV…GQYN and PLPT…NNNQ. The span at 782 to 796 shows a compositional bias: gly residues; sequence NGGGDGGGNGGGDGG. Residues 1370–1385 show a composition bias toward low complexity; it reads NTASSTNSDTSMNNNQ.

The protein belongs to the delta endotoxin family.

In terms of biological role, endotoxin with nematicidal activity. This is Pesticidal crystal protein Cry5Aa (cry5Aa) from Bacillus thuringiensis subsp. darmstadiensis.